The chain runs to 142 residues: Small ribosomal subunit protein uS8c (142 aa).

The protein belongs to the universal ribosomal protein uS8 family. Part of the 30S ribosomal subunit.

It is found in the plastid. Its function is as follows. One of the primary rRNA binding proteins, it binds directly to 16S rRNA central domain where it helps coordinate assembly of the platform of the 30S subunit. In Euglena longa (Euglenophycean alga), this protein is Small ribosomal subunit protein uS8c (rps8).